Here is a 212-residue protein sequence, read N- to C-terminus: Thylakoid membrane protein slr1949 (212 aa).

A helical membrane pass occupies residues 109–131; it reads WVQDGLLLLLALGLCGISGYRLW. The stretch at 180 to 212 forms a coiled coil; sequence PNRRQRKQYETRLQALRQSAAKMKAKTQKAKAL.

Its subcellular location is the cellular thylakoid membrane. The chain is Thylakoid membrane protein slr1949 from Synechocystis sp. (strain ATCC 27184 / PCC 6803 / Kazusa).